A 709-amino-acid polypeptide reads, in one-letter code: Dual specificity calcium/calmodulin-dependent 3',5'-cyclic nucleotide phosphodiesterase 1C (709 aa).

An N-acetylmethionine modification is found at M1. The calmodulin-binding stretch occupies residues 123-146 (EKPRFKSIVHAVQAGIFVERMYRR). The PDEase domain occupies 151 to 528 (VGLSYPPAVI…ERWRAKVPKE (378 aa)). H228 acts as the Proton donor in catalysis. Positions 232, 268, 269, and 376 each coordinate Zn(2+). D269 is a Mg(2+) binding site. Disordered regions lie at residues 453–495 (LIDE…APIN) and 523–650 (AKVP…TCRL). A compositionally biased stretch (polar residues) spans 483-495 (VKTSGSEGSAPIN). Residues 523 to 556 (AKVPKEEKAKKEAEEKARLAAEEQQKEMEAKSQA) show a composition bias toward basic and acidic residues. Polar residues predominate over residues 571-581 (ETKNQVNGTRA). 2 stretches are compositionally biased toward basic and acidic residues: residues 582 to 598 (NKSD…EKSS) and 606 to 633 (DFKD…DGTK).

The protein belongs to the cyclic nucleotide phosphodiesterase family. PDE1 subfamily. Homodimer. The cofactor is Zn(2+). It depends on Mg(2+) as a cofactor. In terms of tissue distribution, isoform PDE1C2 is present in the heart and brain and, at lower levels in the lung, liver, kidney and skeletal muscle. Isoform PDE1C1 is expressed in the heart and brain and, at lower levels in lung. Also expressed at low levels in uterus and testis.

The protein resides in the lysosome. The catalysed reaction is a nucleoside 3',5'-cyclic phosphate + H2O = a nucleoside 5'-phosphate + H(+). It carries out the reaction 3',5'-cyclic GMP + H2O = GMP + H(+). It catalyses the reaction 3',5'-cyclic AMP + H2O = AMP + H(+). Type I PDE are activated by the binding of calmodulin in the presence of Ca(2+). Calmodulin-dependent cyclic nucleotide phosphodiesterase with a dual specificity for the second messengers cAMP and cGMP, which are key regulators of many important physiological processes. Has a high affinity for both cAMP and cGMP. Modulates the amplitude and duration of the cAMP signal in sensory cilia in response to odorant stimulation, hence contributing to the generation of action potentials. Regulates smooth muscle cell proliferation. Regulates the stability of growth factor receptors, including PDGFRB. The sequence is that of Dual specificity calcium/calmodulin-dependent 3',5'-cyclic nucleotide phosphodiesterase 1C from Homo sapiens (Human).